A 531-amino-acid chain; its full sequence is ATP synthase subunit beta (531 aa).

The segment at 1–48 (MVKAVTSSKETAKVEKKKSAPRSGVKKAVSKSQAGVKDSSSPVHKSSK) is disordered. Residues 19 to 29 (SAPRSGVKKAV) are compositionally biased toward basic residues. A compositionally biased stretch (polar residues) spans 30 to 44 (SKSQAGVKDSSSPVH). Position 203–210 (203–210 (GGAGVGKT)) interacts with ATP.

It belongs to the ATPase alpha/beta chains family. In terms of assembly, F-type ATPases have 2 components, CF(1) - the catalytic core - and CF(0) - the membrane proton channel. CF(1) has five subunits: alpha(3), beta(3), gamma(1), delta(1), epsilon(1). CF(0) has three main subunits: a(1), b(2) and c(9-12). The alpha and beta chains form an alternating ring which encloses part of the gamma chain. CF(1) is attached to CF(0) by a central stalk formed by the gamma and epsilon chains, while a peripheral stalk is formed by the delta and b chains.

It is found in the cell inner membrane. The catalysed reaction is ATP + H2O + 4 H(+)(in) = ADP + phosphate + 5 H(+)(out). In terms of biological role, produces ATP from ADP in the presence of a proton gradient across the membrane. The catalytic sites are hosted primarily by the beta subunits. The chain is ATP synthase subunit beta from Bartonella henselae (strain ATCC 49882 / DSM 28221 / CCUG 30454 / Houston 1) (Rochalimaea henselae).